A 240-amino-acid chain; its full sequence is Ribosomal RNA large subunit methyltransferase E (240 aa).

The segment covering 1–20 (MSKAGGNKGGSRTGGRGGAG) has biased composition (gly residues). Residues 1–40 (MSKAGGNKGGSRTGGRGGAGSSNLHVRVKKKAGTTKESSR) are disordered. Positions 92, 94, 115, 131, and 155 each coordinate S-adenosyl-L-methionine. The active-site Proton acceptor is the Lys-195.

This sequence belongs to the class I-like SAM-binding methyltransferase superfamily. RNA methyltransferase RlmE family.

The protein localises to the cytoplasm. The enzyme catalyses uridine(2552) in 23S rRNA + S-adenosyl-L-methionine = 2'-O-methyluridine(2552) in 23S rRNA + S-adenosyl-L-homocysteine + H(+). Its function is as follows. Specifically methylates the uridine in position 2552 of 23S rRNA at the 2'-O position of the ribose in the fully assembled 50S ribosomal subunit. The sequence is that of Ribosomal RNA large subunit methyltransferase E from Brucella ovis (strain ATCC 25840 / 63/290 / NCTC 10512).